The sequence spans 199 residues: Cytochrome c-type cyt cy (199 aa).

Residues 7 to 27 (ITKIGVTLFAVALFYGFIYML) traverse the membrane as a helical segment. Over residues 69–80 (AAETAEAAAPAE) the composition is skewed to low complexity. The disordered stretch occupies residues 69–93 (AAETAEAAAPAEPAAPPPPAYVEVD). Heme c-binding residues include Cys-112, Cys-115, His-116, and Met-148.

Binds 1 heme c group covalently per subunit.

It localises to the cell membrane. In terms of biological role, electron transfer pathways that operates during photosynthesis. In Rhodobacter capsulatus (strain ATCC BAA-309 / NBRC 16581 / SB1003), this protein is Cytochrome c-type cyt cy (cycY).